Reading from the N-terminus, the 524-residue chain is Inorganic phosphate transporter 1-1 (524 aa).

The Cytoplasmic segment spans residues methionine 1–alanine 24. Residues isoleucine 25 to valine 45 traverse the membrane as a helical segment. Residues threonine 46–alanine 70 lie on the Extracellular side of the membrane. A helical transmembrane segment spans residues alanine 71–leucine 91. Over glycine 92–lysine 99 the chain is Cytoplasmic. A helical transmembrane segment spans residues valine 100–glycine 120. The Extracellular segment spans residues histidine 121–cysteine 131. Residues phenylalanine 132 to methionine 152 form a helical membrane-spanning segment. At serine 153–arginine 161 the chain is on the cytoplasmic side. A helical transmembrane segment spans residues glycine 162 to valine 182. Residues alanine 183–valine 211 are Extracellular-facing. Residues aspartate 212–tryptophan 232 traverse the membrane as a helical segment. Over arginine 233–arginine 292 the chain is Cytoplasmic. The helical transmembrane segment at histidine 293–serine 313 threads the bilayer. Residues glutamine 314 to threonine 348 are Extracellular-facing. A helical transmembrane segment spans residues leucine 349 to isoleucine 369. The Cytoplasmic segment spans residues glycine 370–arginine 371. The chain crosses the membrane as a helical span at residues phenylalanine 372–proline 392. The Extracellular portion of the chain corresponds to tyrosine 393–arginine 402. The helical transmembrane segment at isoleucine 403–threonine 423 threads the bilayer. The Cytoplasmic portion of the chain corresponds to threonine 424–histidine 441. A helical membrane pass occupies residues glycine 442–alanine 462. The Extracellular segment spans residues alanine 463–serine 484. Residues leucine 485 to proline 505 form a helical membrane-spanning segment. The Cytoplasmic portion of the chain corresponds to lysine 506–lysine 524.

It belongs to the major facilitator superfamily. Phosphate:H(+) symporter (TC 2.A.1.9) family. In terms of assembly, interacts with NLA. Ubiquitinated by NLA. Ubiquitination of PHT1-1 leads to its degradation by the proteasome. As to expression, mostly expressed in roots, especially in trichoblasts and in emerging secondary roots and root hairs, but not in root tips. Also present in hydathodes, axillary buds and peripheral endosperm of germinating seeds.

The protein localises to the cell membrane. Inhibited by protonophores (e.g. 2,4-dinitrophenol and carbonylcyanide m-chlorophenylhydrazone), the plasma membrane H(+)-ATPase inhibitor diethylstilbestorol, and the phosphate analog arsenate. Functionally, high-affinity transporter for external inorganic phosphate. Acts as a H(+):phosphate symporter in both low- and high-Pi conditions. Confers sensitivity to arsenate. The chain is Inorganic phosphate transporter 1-1 (PHT1-1) from Arabidopsis thaliana (Mouse-ear cress).